The chain runs to 95 residues: TBK1 inhibitor DP96R (95 aa).

Belongs to the asfivirus DP96R family.

Its function is as follows. Inhibits cGAS-STING-mediated type I IFN expression and NF-kB activation by inhibiting TBK1 and IKBKB/IKKB. Inhibits host TBK1 phosphorylation. This chain is TBK1 inhibitor DP96R, found in Ornithodoros (relapsing fever ticks).